The following is a 104-amino-acid chain: MRSLLCAPLLLLLLSAGESAVITGACDKDLQCGEGMCCAVSLWIRSIRICTPLGSSGEDCHPLSHKVPFDGQRKHHTCPCLPNLVCGQTSPGKYKCLPEFKNVF.

The first 19 residues, 1 to 19, serve as a signal peptide directing secretion; the sequence is MRSLLCAPLLLLLLSAGES. Cystine bridges form between Cys-26–Cys-38, Cys-32–Cys-50, Cys-37–Cys-78, Cys-60–Cys-86, and Cys-80–Cys-96.

The protein belongs to the AVIT (prokineticin) family. As to expression, expressed by the venom gland.

Its subcellular location is the secreted. Functionally, potent agonist for both PKR1/PROKR1 and PKR2/PROKR2. Potently contracts gastrointestinal (GI) smooth muscle. This chain is AVIToxin-VAR1, found in Varanus varius (Lace monitor lizard).